The following is a 469-amino-acid chain: Neuraminidase (469 aa).

At 1 to 9 the chain is on the intravirion side; the sequence is MNPNQKIIT. A helical membrane pass occupies residues 10–30; it reads IGSVSLTIATVCFLMQIAILV. Residues 11-33 are involved in apical transport and lipid raft association; it reads GSVSLTIATVCFLMQIAILVTTV. The Virion surface segment spans residues 31 to 469; it reads TTVTLHFRQY…DGADINLMPI (439 aa). Residues 36–88 form a hypervariable stalk region region; that stretch reads HFRQYECDSPANNQVMPCEPTIIERNITEIVYLNNTTIEKEICPKLVEYRNWS. Asn61, Asn69, Asn70, and Asn86 each carry an N-linked (GlcNAc...) asparagine; by host glycan. The head of neuraminidase stretch occupies residues 91 to 469; sequence QCKITGFAPF…DGADINLMPI (379 aa). 8 disulfides stabilise this stretch: Cys92-Cys417, Cys124-Cys129, Cys183-Cys230, Cys232-Cys237, Cys278-Cys291, Cys280-Cys289, Cys318-Cys337, and Cys421-Cys447. Arg118 contributes to the substrate binding site. Asn146 carries an N-linked (GlcNAc...) asparagine; by host glycan. The active-site Proton donor/acceptor is Asp151. Residue Arg152 participates in substrate binding. N-linked (GlcNAc...) asparagine; by host glycosylation is found at Asn200 and Asn234. Substrate is bound at residue 276–277; that stretch reads EE. A substrate-binding site is contributed by Arg292. 3 residues coordinate Ca(2+): Asp293, Gly297, and Asp324. A disordered region spans residues 323-350; the sequence is GDTPRNNDRSSNSNCRNPNNERGNHGVK. The segment covering 331–343 has biased composition (low complexity); the sequence is RSSNSNCRNPNNE. Arg371 contacts substrate. Asn402 carries an N-linked (GlcNAc...) asparagine; by host glycan. Tyr406 serves as the catalytic Nucleophile.

Belongs to the glycosyl hydrolase 34 family. Homotetramer. Ca(2+) serves as cofactor. N-glycosylated.

Its subcellular location is the virion membrane. The protein resides in the host apical cell membrane. The enzyme catalyses Hydrolysis of alpha-(2-&gt;3)-, alpha-(2-&gt;6)-, alpha-(2-&gt;8)- glycosidic linkages of terminal sialic acid residues in oligosaccharides, glycoproteins, glycolipids, colominic acid and synthetic substrates.. Inhibited by the neuraminidase inhibitors zanamivir (Relenza) and oseltamivir (Tamiflu). These drugs interfere with the release of progeny virus from infected cells and are effective against all influenza strains. Resistance to neuraminidase inhibitors is quite rare. Its function is as follows. Catalyzes the removal of terminal sialic acid residues from viral and cellular glycoconjugates. Cleaves off the terminal sialic acids on the glycosylated HA during virus budding to facilitate virus release. Additionally helps virus spread through the circulation by further removing sialic acids from the cell surface. These cleavages prevent self-aggregation and ensure the efficient spread of the progeny virus from cell to cell. Otherwise, infection would be limited to one round of replication. Described as a receptor-destroying enzyme because it cleaves a terminal sialic acid from the cellular receptors. May facilitate viral invasion of the upper airways by cleaving the sialic acid moieties on the mucin of the airway epithelial cells. Likely to plays a role in the budding process through its association with lipid rafts during intracellular transport. May additionally display a raft-association independent effect on budding. Plays a role in the determination of host range restriction on replication and virulence. Sialidase activity in late endosome/lysosome traffic seems to enhance virus replication. In Aves (Human), this protein is Neuraminidase.